Here is a 613-residue protein sequence, read N- to C-terminus: AP-5 complex subunit mu (613 aa).

An MHD domain is found at 309–563 (KQRLLFTIHE…DYAKVSFKIV (255 aa)). The interval 501 to 522 (SPLQSRRKGDGDDEESEDESAE) is disordered. Residues 511–521 (GDDEESEDESA) are compositionally biased toward acidic residues.

The protein belongs to the adaptor complexes medium subunit family. As to quaternary structure, probably part of the adaptor protein complex 5 (AP-5).

It localises to the cytoplasmic vesicle membrane. The chain is AP-5 complex subunit mu (AP5M) from Arabidopsis thaliana (Mouse-ear cress).